The chain runs to 467 residues: 3-isopropylmalate dehydratase large subunit (467 aa).

[4Fe-4S] cluster is bound by residues Cys347, Cys407, and Cys410.

Belongs to the aconitase/IPM isomerase family. LeuC type 1 subfamily. As to quaternary structure, heterodimer of LeuC and LeuD. Requires [4Fe-4S] cluster as cofactor.

The enzyme catalyses (2R,3S)-3-isopropylmalate = (2S)-2-isopropylmalate. It participates in amino-acid biosynthesis; L-leucine biosynthesis; L-leucine from 3-methyl-2-oxobutanoate: step 2/4. Catalyzes the isomerization between 2-isopropylmalate and 3-isopropylmalate, via the formation of 2-isopropylmaleate. This chain is 3-isopropylmalate dehydratase large subunit, found in Gloeothece citriformis (strain PCC 7424) (Cyanothece sp. (strain PCC 7424)).